We begin with the raw amino-acid sequence, 133 residues long: Large ribosomal subunit protein bL17 (133 aa).

The protein belongs to the bacterial ribosomal protein bL17 family. In terms of assembly, part of the 50S ribosomal subunit. Contacts protein L32.

This is Large ribosomal subunit protein bL17 from Polaromonas naphthalenivorans (strain CJ2).